Reading from the N-terminus, the 257-residue chain is tRNA pseudouridine synthase A (257 aa).

Aspartate 53 functions as the Nucleophile in the catalytic mechanism. Tyrosine 111 contacts substrate.

Belongs to the tRNA pseudouridine synthase TruA family. As to quaternary structure, homodimer.

It carries out the reaction uridine(38/39/40) in tRNA = pseudouridine(38/39/40) in tRNA. Functionally, formation of pseudouridine at positions 38, 39 and 40 in the anticodon stem and loop of transfer RNAs. The chain is tRNA pseudouridine synthase A from Xanthomonas campestris pv. campestris (strain 8004).